Consider the following 347-residue polypeptide: S-adenosylmethionine:tRNA ribosyltransferase-isomerase (347 aa).

It belongs to the QueA family. In terms of assembly, monomer.

The protein resides in the cytoplasm. The catalysed reaction is 7-aminomethyl-7-carbaguanosine(34) in tRNA + S-adenosyl-L-methionine = epoxyqueuosine(34) in tRNA + adenine + L-methionine + 2 H(+). It participates in tRNA modification; tRNA-queuosine biosynthesis. In terms of biological role, transfers and isomerizes the ribose moiety from AdoMet to the 7-aminomethyl group of 7-deazaguanine (preQ1-tRNA) to give epoxyqueuosine (oQ-tRNA). The chain is S-adenosylmethionine:tRNA ribosyltransferase-isomerase from Gluconobacter oxydans (strain 621H) (Gluconobacter suboxydans).